Reading from the N-terminus, the 602-residue chain is Toxin YwqJ (602 aa).

In terms of domain architecture, LXG spans 1–235 (MSKVFESKSL…TTYIDAKTQQ (235 aa)). 2 coiled-coil regions span residues 6–41 (ESKS…VADL) and 227–251 (TYID…EANK).

It in the N-terminal section; belongs to the LXG family. Probably interacts with cognate immunity protein YwqK but not with non-cognate immunity proteins. The interaction inhibits the toxic activity of YwqJ.

It localises to the secreted. Toxic component of one of 6 LXG toxin-immunity modules in this strain. They promote kin selection, mediate competition in biofilms, and drive spatial segregation of different strains, indicating that LXG toxins may help avoid warfare between strains in biofilms. Mediates intercellular competition during biofilm formation; disruption of the operon disadvantages the bacteria, but overexpression of the cognate immunity protein restores growth in competition with wild-type. Overexpression alone in situ causes growth arrest but not cell lysis; no effect is seen on DNA or rRNA. Co-overexpression with cognate immunity protein YwqK does not cause growth arrest. The toxic effect is dependent on the epsA and tapA operons which are required for biofilm formation. Its toxic effects are probably neutralized by its cognate immunity protein YwqK, but not by immunity proteins specific to other toxins with the LXG domain. May have deaminase activity. The sequence is that of Toxin YwqJ (ywqJ) from Bacillus subtilis (strain 168).